The following is a 1130-amino-acid chain: Tyrosine-protein kinase ABL1 (1130 aa).

The interval 1 to 60 (MLEICLKLVGCKSKKGLSSSSSCYLEEALQRPVASDFEPQGLSEAARWNSKENLLAGPSE) is CAP. Leu2 carries the N-myristoyl glycine lipid modification. A Phosphoserine modification is found at Ser50. One can recognise an SH3 domain in the interval 61-121 (NDPNLFVALY…PSNYITPVNS (61 aa)). The residue at position 70 (Tyr70) is a Phosphotyrosine; by autocatalysis. Residues Tyr115, Tyr128, Tyr139, Tyr172, Tyr185, and Tyr215 each carry the phosphotyrosine modification. In terms of domain architecture, SH2 spans 127 to 217 (WYHGPVSRNA…GLITTLHYPA (91 aa)). Position 226 is a phosphotyrosine; by autocatalysis (Tyr226). Ser229 carries the phosphoserine modification. One can recognise a Protein kinase domain in the interval 242–493 (ITMKHKLGGG…PSFAEIHQAF (252 aa)). 248-256 (LGGGQYGEV) contacts ATP. A phosphotyrosine mark is found at Tyr253 and Tyr257. ATP-binding positions include Lys271 and 316 to 322 (EFMTYGN). Asp363 acts as the Proton acceptor in catalysis. The Kinase activation loop motif lies at 381 to 405 (DFGLSRLMTGDTYTAHAGAKFPIKW). Tyr393 carries the phosphotyrosine; by autocatalysis and SRC-type Tyr-kinases modification. A Phosphotyrosine modification is found at Tyr413. 3 positions are modified to phosphoserine: Ser446, Ser559, and Ser569. Residues 518–996 (AVSTLLQAPE…SASSALAGDQ (479 aa)) form a disordered region. The span at 537 to 566 (RAAEHRDTTDVPEMPHSKGQGESDPLDHEP) shows a compositional bias: basic and acidic residues. Residues 586–597 (EDERLLPKDKKT) are compositionally biased toward basic and acidic residues. Positions 605 to 609 (KKKKK) match the Nuclear localization signal 1 motif. 2 positions are modified to phosphoserine; by PAK2: Ser618 and Ser619. Ser620, Ser659, and Ser683 each carry phosphoserine. The span at 620–640 (SFREMDGQPERRGAGEEEGRD) shows a compositional bias: basic and acidic residues. Residues 689 to 698 (KSSTLTSSRL) are compositionally biased toward polar residues. The Nuclear localization signal 2 signature appears at 709-715 (SSKRFLR). At Lys711 the chain carries N6-acetyllysine; by EP300. A Phosphoserine modification is found at Ser718. 2 positions are modified to phosphothreonine: Thr735 and Thr751. Residues 740–752 (LQSTGRQFDSSTF) are compositionally biased toward polar residues. Over residues 755–774 (HKSEKPALPRKRAGENRSDQ) the composition is skewed to basic and acidic residues. The Nuclear localization signal 3 motif lies at 762-769 (LPRKRAGE). The residue at position 781 (Thr781) is a Phosphothreonine. Basic and acidic residues predominate over residues 788–802 (KKNEEAADEVFKDIM). A phosphothreonine mark is found at Thr814, Thr823, Thr844, and Thr852. Ser855 carries the phosphoserine modification. The segment at 869–968 (PAEESRVRRH…VLPATPKPQS (100 aa)) is DNA-binding. Positions 881–891 (SSESPGRDKGK) are enriched in basic and acidic residues. A compositionally biased stretch (low complexity) spans 905–915 (ASAGKAGGKPS). Ser917 carries the phosphoserine modification. An F-actin-binding region spans residues 953–1130 (EGLKKPVLPA…VKEISDIVQR (178 aa)). Residues 965–975 (KPQSAKPSGTP) show a composition bias toward polar residues. Ser977 bears the Phosphoserine mark. The span at 984–993 (TLPSASSALA) shows a compositional bias: low complexity. Positions 1090 to 1100 (LENNLRELQIC) match the Nuclear export signal motif.

The protein belongs to the protein kinase superfamily. Tyr protein kinase family. ABL subfamily. Interacts with SORBS1 following insulin stimulation. Found in a trimolecular complex containing CDK5 and CABLES1. Interacts with CABLES1 and PSTPIP1. Interacts with ZDHHC16, ITGB1 and HCK. Interacts with STX17; probably phosphorylates STX17. Interacts with INPPL1/SHIP2. Interacts with the 14-3-3 proteins, YWHAB, YWHAE, YWHAG, YWHAH, SFN and YWHAZ; the interaction with 14-3-3 proteins requires phosphorylation on Thr-735 and, sequesters ABL1 into the cytoplasm. Interacts with ABI1, ABI2, BCR, CRK, FGR, FYN, HCK, LYN, PSMA7 RAD9A, RAD51, RAD52, TP73 and WASF3. A complex made of ABL1, CTTN and MYLK regulates cortical actin-based cytoskeletal rearrangement critical to sphingosine 1-phosphate (S1P)-mediated endothelial cell (EC) barrier enhancement. Interacts (via SH3 domain) with CASP9; the interaction is direct and increases in the response of cells to genotoxic stress and ABL1/c-Abl activation. Found in a complex with ABL1, ABL2, CRK and UNC119; leading to the inhibition of CRK phosphorylation by ABL kinases. Interacts with TBX21. Interacts with NEDD9/HEF1; interaction is induced by CXCL12 promotion of ABL-mediated phosphorylation of NEDD9/HEF1. Mg(2+) is required as a cofactor. In terms of processing, acetylated at Lys-711 by EP300 which promotes the cytoplasmic translocation. Phosphorylation at Tyr-70 by members of the SRC family of kinases disrupts SH3 domain-based autoinhibitory interactions and intermolecular associations, such as that with ABI1, and also enhances kinase activity. Phosphorylation at Tyr-226 and Tyr-393 correlate with increased activity. DNA damage-induced activation of ABL1 requires the function of ATM and Ser-446 phosphorylation. Phosphorylation at Ser-569 has been attributed to a CDC2-associated kinase and is coupled to cell division. Phosphorylation at Ser-618 and Ser-619 by PAK2 increases binding to CRK and reduces binding to ABI1. Phosphorylation on Thr-735 is required for binding 14-3-3 proteins for cytoplasmic translocation. Phosphorylated by PRKDC. Post-translationally, polyubiquitinated. Polyubiquitination of ABL1 leads to degradation. Widely expressed.

The protein resides in the cytoplasm. Its subcellular location is the cytoskeleton. It is found in the nucleus. It localises to the mitochondrion. The protein localises to the nucleus membrane. The catalysed reaction is L-tyrosyl-[protein] + ATP = O-phospho-L-tyrosyl-[protein] + ADP + H(+). With respect to regulation, stabilized in the inactive form by an association between the SH3 domain and the SH2-TK linker region, interactions of the N-terminal cap, and contributions from an N-terminal myristoyl group and phospholipids. Activated by autophosphorylation as well as by SRC-family kinase-mediated phosphorylation. Activated by RIN1 binding to the SH2 and SH3 domains. Also stimulated by cell death inducers and DNA-damage. Phosphatidylinositol 4,5-bisphosphate (PIP2), a highly abundant phosphoinositide known to regulate cytoskeletal and membrane proteins, also inhibits the tyrosine kinase activity. Activated by 5-(1,3-diaryl-1H-pyrazol-4-yl)hydantoin, 5-[3-(4-fluorophenyl)-1-phenyl-1H-pyrazol-4-yl]-2,4-imidazolidinedione (DPH). Inhibited by ABI1, whose activity is controlled by ABL1 itself through tyrosine phosphorylation. Also inhibited by imatinib mesylate (Gleevec) which is used for the treatment of chronic myeloid leukemia (CML), and by VX-680, an inhibitor that also acts on imatinib-resistant mutants. Functionally, non-receptor tyrosine-protein kinase that plays a role in many key processes linked to cell growth and survival such as cytoskeleton remodeling in response to extracellular stimuli, cell motility and adhesion, receptor endocytosis, autophagy, DNA damage response and apoptosis. Coordinates actin remodeling through tyrosine phosphorylation of proteins controlling cytoskeleton dynamics like WASF3 (involved in branch formation); ANXA1 (involved in membrane anchoring); DBN1, DBNL, CTTN, RAPH1 and ENAH (involved in signaling); or MAPT and PXN (microtubule-binding proteins). Phosphorylation of WASF3 is critical for the stimulation of lamellipodia formation and cell migration. Involved in the regulation of cell adhesion and motility through phosphorylation of key regulators of these processes such as BCAR1, CRK, CRKL, DOK1, EFS or NEDD9. Phosphorylates multiple receptor tyrosine kinases and more particularly promotes endocytosis of EGFR, facilitates the formation of neuromuscular synapses through MUSK, inhibits PDGFRB-mediated chemotaxis and modulates the endocytosis of activated B-cell receptor complexes. Other substrates which are involved in endocytosis regulation are the caveolin (CAV1) and RIN1. Moreover, ABL1 regulates the CBL family of ubiquitin ligases that drive receptor down-regulation and actin remodeling. Phosphorylation of CBL leads to increased EGFR stability. Involved in late-stage autophagy by regulating positively the trafficking and function of lysosomal components. ABL1 targets to mitochondria in response to oxidative stress and thereby mediates mitochondrial dysfunction and cell death. In response to oxidative stress, phosphorylates serine/threonine kinase PRKD2 at 'Tyr-717'. ABL1 is also translocated in the nucleus where it has DNA-binding activity and is involved in DNA-damage response and apoptosis. Many substrates are known mediators of DNA repair: DDB1, DDB2, ERCC3, ERCC6, RAD9A, RAD51, RAD52 or WRN. Activates the proapoptotic pathway when the DNA damage is too severe to be repaired. Phosphorylates TP73, a primary regulator for this type of damage-induced apoptosis. Phosphorylates the caspase CASP9 on 'Tyr-153' and regulates its processing in the apoptotic response to DNA damage. Phosphorylates PSMA7 that leads to an inhibition of proteasomal activity and cell cycle transition blocks. ABL1 also acts as a regulator of multiple pathological signaling cascades during infection. Several known tyrosine-phosphorylated microbial proteins have been identified as ABL1 substrates. This is the case of A36R of Vaccinia virus, Tir (translocated intimin receptor) of pathogenic E.coli and possibly Citrobacter, CagA (cytotoxin-associated gene A) of H.pylori, or AnkA (ankyrin repeat-containing protein A) of A.phagocytophilum. Pathogens can highjack ABL1 kinase signaling to reorganize the host actin cytoskeleton for multiple purposes, like facilitating intracellular movement and host cell exit. Finally, functions as its own regulator through autocatalytic activity as well as through phosphorylation of its inhibitor, ABI1. Regulates T-cell differentiation in a TBX21-dependent manner. Positively regulates chemokine-mediated T-cell migration, polarization, and homing to lymph nodes and immune-challenged tissues, potentially via activation of NEDD9/HEF1 and RAP1. Phosphorylates TBX21 on tyrosine residues leading to an enhancement of its transcriptional activator activity. This chain is Tyrosine-protein kinase ABL1 (ABL1), found in Homo sapiens (Human).